The sequence spans 226 residues: EEF1A lysine methyltransferase 1 (226 aa).

At Ser-2 the chain carries N-acetylserine. Ser-2 bears the Phosphoserine mark.

The protein belongs to the class I-like SAM-binding methyltransferase superfamily. EFM5 family.

The protein localises to the cytoplasm. It catalyses the reaction L-lysyl-[protein] + 3 S-adenosyl-L-methionine = N(6),N(6),N(6)-trimethyl-L-lysyl-[protein] + 3 S-adenosyl-L-homocysteine + 3 H(+). Protein-lysine methyltransferase that selectively catalyzes the trimethylation of EEF1A at 'Lys-79'. The protein is EEF1A lysine methyltransferase 1 of Bos taurus (Bovine).